Consider the following 153-residue polypeptide: MTAPADEAPAVEDAPVAEDIAPVPAGRPVQTVGRRKEAVVRVRLVPGNGGFKLNGKSLEQYFPNKVHQQLIKEPLVTVERVESFDVAATLRGGGPSGQAGALRMAIARALVELDADDRPALKKAGMLTRDSREKERKKYGLKKARKAPQYSKR.

The span at 1 to 19 shows a compositional bias: low complexity; the sequence is MTAPADEAPAVEDAPVAED. Disordered stretches follow at residues 1–23 and 121–153; these read MTAP…IAPV and LKKA…YSKR. A compositionally biased stretch (basic and acidic residues) spans 129–138; it reads RDSREKERKK. Positions 139–153 are enriched in basic residues; sequence YGLKKARKAPQYSKR.

This sequence belongs to the universal ribosomal protein uS9 family.

This chain is Small ribosomal subunit protein uS9, found in Saccharopolyspora erythraea (strain ATCC 11635 / DSM 40517 / JCM 4748 / NBRC 13426 / NCIMB 8594 / NRRL 2338).